Here is a 77-residue protein sequence, read N- to C-terminus: Large ribosomal subunit protein bL28 (77 aa).

It belongs to the bacterial ribosomal protein bL28 family.

This Ralstonia nicotianae (strain ATCC BAA-1114 / GMI1000) (Ralstonia solanacearum) protein is Large ribosomal subunit protein bL28.